Consider the following 306-residue polypeptide: UDP-N-acetylenolpyruvoylglucosamine reductase (306 aa).

An FAD-binding PCMH-type domain is found at 34–198 (VGGPADLLIT…LEVTFKLHNS (165 aa)). Residue arginine 177 is part of the active site. Catalysis depends on serine 227, which acts as the Proton donor. Residue glutamate 297 is part of the active site.

This sequence belongs to the MurB family. FAD is required as a cofactor.

It is found in the cytoplasm. The enzyme catalyses UDP-N-acetyl-alpha-D-muramate + NADP(+) = UDP-N-acetyl-3-O-(1-carboxyvinyl)-alpha-D-glucosamine + NADPH + H(+). It participates in cell wall biogenesis; peptidoglycan biosynthesis. Cell wall formation. In Clostridium botulinum (strain Okra / Type B1), this protein is UDP-N-acetylenolpyruvoylglucosamine reductase.